The chain runs to 180 residues: Molybdopterin synthase catalytic subunit (180 aa).

Residues 123–124 (HR), Lys-139, and 146–148 (KLE) contribute to the substrate site. A disordered region spans residues 161-180 (RDGQKGVKVEGGKEGVEAKH).

Belongs to the MoaE family. MOCS2B subfamily. As to quaternary structure, heterotetramer; composed of 2 small (MOCS2A) and 2 large (MOCS2B) subunits.

Its subcellular location is the cytoplasm. The enzyme catalyses 2 [molybdopterin-synthase sulfur-carrier protein]-C-terminal-Gly-aminoethanethioate + cyclic pyranopterin phosphate + H2O = molybdopterin + 2 [molybdopterin-synthase sulfur-carrier protein]-C-terminal Gly-Gly + 2 H(+). It functions in the pathway cofactor biosynthesis; molybdopterin biosynthesis. In terms of biological role, catalytic subunit of the molybdopterin synthase complex, a complex that catalyzes the conversion of precursor Z into molybdopterin. Acts by mediating the incorporation of 2 sulfur atoms from thiocarboxylated MOCS2A into precursor Z to generate a dithiolene group. The sequence is that of Molybdopterin synthase catalytic subunit from Pyrenophora tritici-repentis (strain Pt-1C-BFP) (Wheat tan spot fungus).